Consider the following 635-residue polypeptide: MIDFTCYPRLSRIQTPEDLRAFQESELRAVADELRNYLIESVGLSGGHFAAGLGVVELTIALHYLYCTPIDQLVWDVGHQTYPHKILTGRRDKISTVKHQGGLAPFPKREESIYDTFGVGHSSTSISAALGMAIVAQRNGDERKVVAIIGDGAMTAGMAYEALNHAGGMSPAPNLLVILNDNRMSISEAVGGLTKMLGRATGSKALNAIREGGKRIFGDKKTNATARFLRRWEEHWKGMFVPSTLFEEMGFHYTGPIDGHDLPALLGALKTLRTLKGPQLLHVITTKGKGYELAEGDQIGYHAVAPFDPQKGLIKAGAKKQTYTDVFSEWLCDMAAVEPRLLAITPAMREGSGLVRFSQEYPQRYFDVAIAEQHAITLAAGMATQGAKPVVAIYSTFLQRGYDQLVHDVALQKLDVLFAVDRGGVVGPDGATHAGNLDLSFLRCVPNMMLMAPADEAECRKMLSTGFHYSGPVAVRYPRGTGPGVVPSAELDVLPVGVAQLRHSGTRIALLGFGVCVAPAEQVGRRLGLTVVNMRFIKPLDRTLLLELARTHEVFVTIEDNVVAGGAGSGVAELLNAEGIVLPIVHLGLPDAFQQHASREDLLAEAGIDAAGVYAALLSRWPDLAVQNHPLSAVS.

Thiamine diphosphate contacts are provided by residues H79 and 120–122 (GHS). A Mg(2+)-binding site is contributed by D151. Residues 152–153 (GA), N182, Y291, and E372 each bind thiamine diphosphate. N182 serves as a coordination point for Mg(2+).

The protein belongs to the transketolase family. DXPS subfamily. As to quaternary structure, homodimer. It depends on Mg(2+) as a cofactor. Thiamine diphosphate serves as cofactor.

The catalysed reaction is D-glyceraldehyde 3-phosphate + pyruvate + H(+) = 1-deoxy-D-xylulose 5-phosphate + CO2. It functions in the pathway metabolic intermediate biosynthesis; 1-deoxy-D-xylulose 5-phosphate biosynthesis; 1-deoxy-D-xylulose 5-phosphate from D-glyceraldehyde 3-phosphate and pyruvate: step 1/1. Catalyzes the acyloin condensation reaction between C atoms 2 and 3 of pyruvate and glyceraldehyde 3-phosphate to yield 1-deoxy-D-xylulose-5-phosphate (DXP). The chain is 1-deoxy-D-xylulose-5-phosphate synthase from Xylella fastidiosa (strain M23).